The chain runs to 682 residues: Potassium-transporting ATPase ATP-binding subunit (682 aa).

The next 4 helical transmembrane spans lie at 34–54, 62–82, 219–239, and 254–274; these read PVMF…IAMA, ALFS…ANFA, IALT…TATL, and VLVA…LSAI. Aspartate 307 (4-aspartylphosphate intermediate) is an active-site residue. ATP-binding positions include aspartate 344, glutamate 348, 377-384, and lysine 395; that span reads FTAQSRMS. Residues aspartate 518 and aspartate 522 each contribute to the Mg(2+) site. A run of 3 helical transmembrane segments spans residues 588 to 608, 616 to 636, and 656 to 676; these read FAII…LNIM, AILS…PLAL, and IYGL…DLLL.

The protein belongs to the cation transport ATPase (P-type) (TC 3.A.3) family. Type IA subfamily. In terms of assembly, the system is composed of three essential subunits: KdpA, KdpB and KdpC.

It localises to the cell inner membrane. The enzyme catalyses K(+)(out) + ATP + H2O = K(+)(in) + ADP + phosphate + H(+). In terms of biological role, part of the high-affinity ATP-driven potassium transport (or Kdp) system, which catalyzes the hydrolysis of ATP coupled with the electrogenic transport of potassium into the cytoplasm. This subunit is responsible for energy coupling to the transport system and for the release of the potassium ions to the cytoplasm. This chain is Potassium-transporting ATPase ATP-binding subunit, found in Escherichia coli O6:K15:H31 (strain 536 / UPEC).